A 347-amino-acid chain; its full sequence is Magnesium-protoporphyrin IX monomethyl ester [oxidative] cyclase (347 aa).

It belongs to the AcsF family. Requires Fe cation as cofactor.

It carries out the reaction Mg-protoporphyrin IX 13-monomethyl ester + 3 NADPH + 3 O2 + 2 H(+) = 3,8-divinyl protochlorophyllide a + 3 NADP(+) + 5 H2O. It participates in porphyrin-containing compound metabolism; chlorophyll biosynthesis (light-independent). Functionally, catalyzes the formation of the isocyclic ring in chlorophyll biosynthesis. Mediates the cyclase reaction, which results in the formation of divinylprotochlorophyllide (Pchlide) characteristic of all chlorophylls from magnesium-protoporphyrin IX 13-monomethyl ester (MgPMME). The protein is Magnesium-protoporphyrin IX monomethyl ester [oxidative] cyclase of Prochlorococcus marinus (strain SARG / CCMP1375 / SS120).